A 1188-amino-acid chain; its full sequence is AT-rich interactive domain-containing protein 5B (1188 aa).

A Glycyl lysine isopeptide (Lys-Gly) (interchain with G-Cter in SUMO2) cross-link involves residue K130. Residues 251–278 (RPRKKKTCPQRRDSFSGSKDPNNNCDGK) are disordered. Position 264 is a phosphoserine (S264). Residues 265 to 275 (FSGSKDPNNNC) show a composition bias toward polar residues. One can recognise an ARID domain in the interval 319–411 (RADEQAFLVA…LILPYERFIK (93 aa)). K337 carries the N6,N6-dimethyllysine modification. Positions 413–614 (EEDKPLPPIK…LTSQNEAEEE (202 aa)) are disordered. 4 stretches are compositionally biased toward basic and acidic residues: residues 445–459 (IKQE…KENT), 470–484 (SEQR…HKSA), 493–504 (VKGKPEGHKDLG), and 526–535 (SEKEAEEMGD). Residue K446 forms a Glycyl lysine isopeptide (Lys-Gly) (interchain with G-Cter in SUMO2) linkage. Glycyl lysine isopeptide (Lys-Gly) (interchain with G-Cter in SUMO2) cross-links involve residues K494 and K496. The span at 594-609 (PFSSFSATKPPLTSQN) shows a compositional bias: polar residues. Glycyl lysine isopeptide (Lys-Gly) (interchain with G-Cter in SUMO2) cross-links involve residues K767, K774, K803, K810, K893, K916, K920, and K935. The disordered stretch occupies residues 958–978 (SPMTMSGPKKYPESLARSGKP). Glycyl lysine isopeptide (Lys-Gly) (interchain with G-Cter in SUMO2) cross-links involve residues K988, K1000, and K1013. Residues 1030 to 1066 (AVSPLDPAKEASGKEKASEQESEGNKGAYGGHSGAAS) form a disordered region. The residue at position 1032 (S1032) is a Phosphoserine. Residues 1036–1048 (PAKEASGKEKASE) are compositionally biased toward basic and acidic residues. Glycyl lysine isopeptide (Lys-Gly) (interchain with G-Cter in SUMO2) cross-links involve residues K1055 and K1070. Position 1133 is a phosphoserine (S1133).

The protein belongs to the ARID5B family. Methylation at Lys-337 prevents DNA-binding. Demethylation by PHF2 promotes recruitment of the PHF2-ARID5B complex to promoters. As to expression, widely expressed. Expressed in lung, heart, small intestine, kidney, muscle and brain. Also expressed in spleen, thymus, endocrine organs and in uterus and testis.

Its subcellular location is the nucleus. Its function is as follows. Transcription coactivator that binds to the 5'-AATA[CT]-3' core sequence and plays a key role in adipogenesis and liver development. Acts by forming a complex with phosphorylated PHF2, which mediates demethylation at Lys-337, leading to target the PHF2-ARID5B complex to target promoters, where PHF2 mediates demethylation of dimethylated 'Lys-9' of histone H3 (H3K9me2), followed by transcription activation of target genes. The PHF2-ARID5B complex acts as a coactivator of HNF4A in liver. Required for adipogenesis: regulates triglyceride metabolism in adipocytes by regulating expression of adipogenic genes. Overexpression leads to induction of smooth muscle marker genes, suggesting that it may also act as a regulator of smooth muscle cell differentiation and proliferation. The polypeptide is AT-rich interactive domain-containing protein 5B (Arid5b) (Mus musculus (Mouse)).